The chain runs to 258 residues: Phosphate import ATP-binding protein PstB (258 aa).

An ABC transporter domain is found at 13 to 253 (IEVENLNLWY…PKEQSTEDYI (241 aa)). 45–52 (GPSGCGKS) provides a ligand contact to ATP.

This sequence belongs to the ABC transporter superfamily. Phosphate importer (TC 3.A.1.7) family. The complex is composed of two ATP-binding proteins (PstB), two transmembrane proteins (PstC and PstA) and a solute-binding protein (PstS).

It is found in the cell membrane. The catalysed reaction is phosphate(out) + ATP + H2O = ADP + 2 phosphate(in) + H(+). Its function is as follows. Part of the ABC transporter complex PstSACB involved in phosphate import. Responsible for energy coupling to the transport system. The protein is Phosphate import ATP-binding protein PstB of Methanosarcina acetivorans (strain ATCC 35395 / DSM 2834 / JCM 12185 / C2A).